The chain runs to 261 residues: Arcelin-5A (261 aa).

The first 21 residues, 1–21 (MASSKLLSLALFLVLLTHANS), serve as a signal peptide directing secretion. Asparagine 43, asparagine 91, and asparagine 100 each carry an N-linked (GlcNAc...) asparagine glycan. Cysteine 167 and cysteine 203 are oxidised to a cystine. The propeptide occupies 255 to 261 (ILLNNIL).

It belongs to the leguminous lectin family. As to quaternary structure, monomer. The C-terminal segment appears to be highly susceptible to proteolysis.

In terms of biological role, seed storage. This carbohydrate-binding lectin has toxic effects on bean bruchid pests. The polypeptide is Arcelin-5A (ARC5A) (Phaseolus vulgaris (Kidney bean)).